The primary structure comprises 421 residues: Truncated surface protein (421 aa).

The N-terminal stretch at 1-31 is a signal peptide; sequence MRAKGTRKNYQHLWRWGTMLLGMLMICSAAE. Cysteine 53 and cysteine 73 are oxidised to a cystine. Asparagine 87, asparagine 97, asparagine 129, asparagine 135, asparagine 140, asparagine 151, asparagine 155, asparagine 183, asparagine 192, asparagine 229, asparagine 236, asparagine 257, asparagine 271, asparagine 284, asparagine 290, asparagine 296, asparagine 326, asparagine 333, asparagine 349, and asparagine 355 each carry an N-linked (GlcNAc...) asparagine; by host glycan. 5 disulfides stabilise this stretch: cysteine 118/cysteine 200, cysteine 125/cysteine 191, cysteine 130/cysteine 152, cysteine 213/cysteine 242, and cysteine 223/cysteine 234. Residues 130 to 151 are V1; sequence CTDLTNATYANGSSEERGEIRN. Residues 152–191 are V2; sequence CSFNVTTIIRNKIQKEYALFYRLDIVPIDKDNTSYTLINC. The segment at 291 to 324 is V3; that stretch reads CTRPNNNTKKGIAIGPGRTLYAREKIIGDIRQAH. An intrachain disulfide couples cysteine 291 to cysteine 325. The interval 357–367 is CD4-binding loop; it reads SSGGDPEIVMH. A disulfide bridge connects residues cysteine 378 and cysteine 410. Residues 378–410 are V4; the sequence is CKTTQLFNSTWLFNSTWNDTERSDNNETIIIPC. Asparagine 385, asparagine 391, asparagine 395, and asparagine 403 each carry an N-linked (GlcNAc...) asparagine; by host glycan.

Its subcellular location is the virion membrane. This chain is Truncated surface protein (env), found in Human immunodeficiency virus type 1 group M subtype B (isolate NY5) (HIV-1).